We begin with the raw amino-acid sequence, 178 residues long: Gamma-crystallin S (178 aa).

An N-acetylserine modification is found at Ser2. Residues 2 to 5 form an N-terminal arm region; it reads SKAG. Beta/gamma crystallin 'Greek key' domains follow at residues 6–44 and 45–87; these read TKITFFEDKNFQGRHYDSDCDCADFHMYLSRCNSIRVEG and GTWA…RAVH. The segment at 88-93 is connecting peptide; that stretch reads LSSGGQ. Beta/gamma crystallin 'Greek key' domains lie at 94-134 and 135-177; these read YKLQ…KVLE and GAWI…RRIV.

Belongs to the beta/gamma-crystallin family. Monomer.

Functionally, crystallins are the dominant structural components of the vertebrate eye lens. In Bos taurus (Bovine), this protein is Gamma-crystallin S (CRYGS).